Consider the following 546-residue polypeptide: 2-isopropylmalate synthase (546 aa).

The Pyruvate carboxyltransferase domain maps to 8–271 (ILIFDTTLRD…NSFFGRSSDS (264 aa)). Positions 17, 208, 210, and 244 each coordinate Mn(2+). The segment at 408–546 (QLSHVQVSCG…EKKVFSNPKN (139 aa)) is regulatory domain.

The protein belongs to the alpha-IPM synthase/homocitrate synthase family. LeuA type 1 subfamily. As to quaternary structure, homodimer. Requires Mn(2+) as cofactor.

Its subcellular location is the cytoplasm. It carries out the reaction 3-methyl-2-oxobutanoate + acetyl-CoA + H2O = (2S)-2-isopropylmalate + CoA + H(+). The protein operates within amino-acid biosynthesis; L-leucine biosynthesis; L-leucine from 3-methyl-2-oxobutanoate: step 1/4. Catalyzes the condensation of the acetyl group of acetyl-CoA with 3-methyl-2-oxobutanoate (2-ketoisovalerate) to form 3-carboxy-3-hydroxy-4-methylpentanoate (2-isopropylmalate). The protein is 2-isopropylmalate synthase of Prochlorococcus marinus (strain MIT 9515).